Consider the following 955-residue polypeptide: RNA polymerase-associated protein RapA (955 aa).

Positions 163-333 (EVGHRYAPRV…FARLRLLDPE (171 aa)) constitute a Helicase ATP-binding domain. 176–183 (DEVGLGKT) is an ATP binding site. The short motif at 279–282 (DEAH) is the DEAH box element. Positions 478–642 (RVEWLLELLL…AVRDELFELL (165 aa)) constitute a Helicase C-terminal domain.

The protein belongs to the SNF2/RAD54 helicase family. RapA subfamily. As to quaternary structure, interacts with the RNAP. Has a higher affinity for the core RNAP than for the holoenzyme. Its ATPase activity is stimulated by binding to RNAP.

Transcription regulator that activates transcription by stimulating RNA polymerase (RNAP) recycling in case of stress conditions such as supercoiled DNA or high salt concentrations. Probably acts by releasing the RNAP, when it is trapped or immobilized on tightly supercoiled DNA. Does not activate transcription on linear DNA. Probably not involved in DNA repair. This is RNA polymerase-associated protein RapA from Aeromonas hydrophila subsp. hydrophila (strain ATCC 7966 / DSM 30187 / BCRC 13018 / CCUG 14551 / JCM 1027 / KCTC 2358 / NCIMB 9240 / NCTC 8049).